We begin with the raw amino-acid sequence, 54 residues long: UPF0391 membrane protein Pfl01_0044 (54 aa).

Helical transmembrane passes span Trp-4–Ala-24 and Gly-29–Gly-49.

It belongs to the UPF0391 family.

It is found in the cell membrane. The polypeptide is UPF0391 membrane protein Pfl01_0044 (Pseudomonas fluorescens (strain Pf0-1)).